A 189-amino-acid polypeptide reads, in one-letter code: Riboflavin kinase (189 aa).

Mg(2+) is bound by residues Thr42 and Asn44. Glu124 serves as the catalytic Nucleophile.

It belongs to the flavokinase family. Requires Zn(2+) as cofactor. Mg(2+) is required as a cofactor.

It carries out the reaction riboflavin + ATP = FMN + ADP + H(+). The protein operates within cofactor biosynthesis; FMN biosynthesis; FMN from riboflavin (ATP route): step 1/1. Catalyzes the phosphorylation of riboflavin (vitamin B2) to form flavin mononucleotide (FMN) coenzyme. This Candida glabrata (strain ATCC 2001 / BCRC 20586 / JCM 3761 / NBRC 0622 / NRRL Y-65 / CBS 138) (Yeast) protein is Riboflavin kinase (FMN1).